The primary structure comprises 447 residues: 2-oxoadipate dioxygenase/decarboxylase (447 aa).

2-oxoadipate is bound by residues His-68, Arg-72, and His-224. His-68 contributes to the Fe(2+) binding site. Residues His-224 and Glu-290 each contribute to the Fe(2+) site. Position 391 (Val-391) interacts with 2-oxoadipate.

The protein belongs to the 2-oxoadipate dioxygenase/decarboxylase family. The cofactor is Fe(2+).

The catalysed reaction is 2-oxoadipate + O2 = (R)-2-hydroxyglutarate + CO2. Catalyzes the decarboxylation and hydroxylation of 2-oxoadipate (2OA) to form D-2-hydroxyglutarate (D-2-HGA). This Shigella flexneri protein is 2-oxoadipate dioxygenase/decarboxylase.